A 353-amino-acid polypeptide reads, in one-letter code: Photosystem II protein D1 (353 aa).

Thr2 is modified (N-acetylthreonine). Residue Thr2 is modified to Phosphothreonine. A run of 3 helical transmembrane segments spans residues 29 to 46 (YIGW…TATS), 118 to 133 (HFLL…EWEL), and 142 to 156 (WIAV…AATA). His118 is a binding site for chlorophyll a. Tyr126 contacts pheophytin a. The [CaMn4O5] cluster site is built by Asp170 and Glu189. The helical transmembrane segment at 197-218 (FHMLGVAGVFGGSLFSAMHGSL) threads the bilayer. His198 contributes to the chlorophyll a binding site. A quinone is bound by residues His215 and 264-265 (SF). His215 provides a ligand contact to Fe cation. His272 contributes to the Fe cation binding site. The chain crosses the membrane as a helical span at residues 274–288 (FLAAWPVVGIWFTAL). His332, Glu333, Asp342, and Ala344 together coordinate [CaMn4O5] cluster. The propeptide occupies 345–353 (AVEAPSING).

Belongs to the reaction center PufL/M/PsbA/D family. As to quaternary structure, PSII is composed of 1 copy each of membrane proteins PsbA, PsbB, PsbC, PsbD, PsbE, PsbF, PsbH, PsbI, PsbJ, PsbK, PsbL, PsbM, PsbT, PsbX, PsbY, PsbZ, Psb30/Ycf12, at least 3 peripheral proteins of the oxygen-evolving complex and a large number of cofactors. It forms dimeric complexes. Requires The D1/D2 heterodimer binds P680, chlorophylls that are the primary electron donor of PSII, and subsequent electron acceptors. It shares a non-heme iron and each subunit binds pheophytin, quinone, additional chlorophylls, carotenoids and lipids. D1 provides most of the ligands for the Mn4-Ca-O5 cluster of the oxygen-evolving complex (OEC). There is also a Cl(-1) ion associated with D1 and D2, which is required for oxygen evolution. The PSII complex binds additional chlorophylls, carotenoids and specific lipids. as cofactor. In terms of processing, tyr-161 forms a radical intermediate that is referred to as redox-active TyrZ, YZ or Y-Z. C-terminally processed by CTPA; processing is essential to allow assembly of the oxygen-evolving complex and thus photosynthetic growth.

The protein resides in the plastid. It localises to the chloroplast thylakoid membrane. The catalysed reaction is 2 a plastoquinone + 4 hnu + 2 H2O = 2 a plastoquinol + O2. Functionally, photosystem II (PSII) is a light-driven water:plastoquinone oxidoreductase that uses light energy to abstract electrons from H(2)O, generating O(2) and a proton gradient subsequently used for ATP formation. It consists of a core antenna complex that captures photons, and an electron transfer chain that converts photonic excitation into a charge separation. The D1/D2 (PsbA/PsbD) reaction center heterodimer binds P680, the primary electron donor of PSII as well as several subsequent electron acceptors. The protein is Photosystem II protein D1 of Medicago sativa (Alfalfa).